A 384-amino-acid polypeptide reads, in one-letter code: MLTDKFLRLQSALFRLLGLELLHEQDVGHRYPWRSICCILSVASFMPLTIAFGLQNVQNVEQLTDSLCSVLVDLLALCKIGLFLWLYKDFKFLIGQFYCVLQTETHTAVAEMIVTRESRRDQFISAMYAYCFITAGLSACLMSPLSMLISYQRTGELQPKFPFPSVYPWDNMKLSNYIISYFWNVCAALGVALPTVCVDTLFCSLSHNLCALFQIARHKMMHFEGRNTKETHENLKHVFQLYALCLNLGHFLNEYFRPLICQFVAASLHLCVLCYQLSANILQPALLFYAAFTAAVVGQVSIYCFCGSSIHSECQLFGQAIYESSWPHLLQENLQLVSSLKIAMMRSSLGCPIDGYFFEANRETLITVSKAFIKVSKKTPQVND.

The Cytoplasmic portion of the chain corresponds to 1-34 (MLTDKFLRLQSALFRLLGLELLHEQDVGHRYPWR). A helical transmembrane segment spans residues 35–55 (SICCILSVASFMPLTIAFGLQ). Over 56 to 66 (NVQNVEQLTDS) the chain is Extracellular. The chain crosses the membrane as a helical span at residues 67–87 (LCSVLVDLLALCKIGLFLWLY). The Cytoplasmic portion of the chain corresponds to 88 to 128 (KDFKFLIGQFYCVLQTETHTAVAEMIVTRESRRDQFISAMY). A helical transmembrane segment spans residues 129-149 (AYCFITAGLSACLMSPLSMLI). Residues 150 to 177 (SYQRTGELQPKFPFPSVYPWDNMKLSNY) lie on the Extracellular side of the membrane. Residues 178–198 (IISYFWNVCAALGVALPTVCV) form a helical membrane-spanning segment. The Cytoplasmic portion of the chain corresponds to 199 to 258 (DTLFCSLSHNLCALFQIARHKMMHFEGRNTKETHENLKHVFQLYALCLNLGHFLNEYFRP). Residues 259-279 (LICQFVAASLHLCVLCYQLSA) traverse the membrane as a helical segment. Residues 280-284 (NILQP) are Extracellular-facing. The helical transmembrane segment at 285 to 305 (ALLFYAAFTAAVVGQVSIYCF) threads the bilayer. Over 306–329 (CGSSIHSECQLFGQAIYESSWPHL) the chain is Cytoplasmic. Residues 330–350 (LQENLQLVSSLKIAMMRSSLG) traverse the membrane as a helical segment. The Extracellular segment spans residues 351–384 (CPIDGYFFEANRETLITVSKAFIKVSKKTPQVND).

The protein belongs to the insect chemoreceptor superfamily. Heteromeric odorant receptor channel (TC 1.A.69) family. Or1a subfamily. Interacts with Orco. Complexes exist early in the endomembrane system in olfactory sensory neurons (OSNs), coupling these complexes to the conserved ciliary trafficking pathway.

The protein localises to the cell membrane. In terms of biological role, odorant receptor which mediates acceptance or avoidance behavior, depending on its substrates. The odorant receptor repertoire encodes a large collection of odor stimuli that vary widely in identity, intensity, and duration. May form a complex with Orco to form odorant-sensing units, providing sensitive and prolonged odorant signaling and calcium permeability. This chain is Putative odorant receptor 98b (Or98b), found in Drosophila melanogaster (Fruit fly).